We begin with the raw amino-acid sequence, 242 residues long: MFHRLLNKSKILACDDKSVNDYIINVKNLSFFYSKKKVIDNISFRVKFGEIITILGPNGGGKTTLIRILVGIYKNYVGLVEYAKDFTIGYLPQHFSVNSLIPMTVEYFLNSSYTNRKRKLGVGDVLKDVNIEKILDRQMSEISYGELQLVLLARCLMLNPDLIILDEPVSCMDINAKNSFYKLINKLISIYNLSVIMTSHDLHFVMSNSYRVICINKSVYCEGSPSEIVKNEKFLKMFSSYA.

Positions 24-241 constitute an ABC transporter domain; the sequence is INVKNLSFFY…EKFLKMFSSY (218 aa). 56-63 lines the ATP pocket; that stretch reads GPNGGGKT.

The protein belongs to the ABC transporter superfamily. Zinc importer (TC 3.A.1.15.5) family. As to quaternary structure, the complex is composed of two ATP-binding proteins (ZnuC), two transmembrane proteins (ZnuB) and a solute-binding protein (ZnuA).

The protein resides in the cell inner membrane. The catalysed reaction is Zn(2+)(out) + ATP(in) + H2O(in) = Zn(2+)(in) + ADP(in) + phosphate(in) + H(+)(in). Part of the ABC transporter complex ZnuABC involved in zinc import. Responsible for energy coupling to the transport system. In Ehrlichia canis (strain Jake), this protein is Zinc import ATP-binding protein ZnuC.